A 782-amino-acid polypeptide reads, in one-letter code: Zinc finger Y-chromosomal protein 1 (782 aa).

2 disordered regions span residues 211 to 233 and 360 to 386; these read ADLE…SKLD and LNQD…ESKQ. Over residues 217-229 the composition is skewed to polar residues; that stretch reads SEVTMNAESGTDS. Residues 372–382 carry the Nuclear localization signal motif; sequence PKQKSKKKKRP. A compositionally biased stretch (basic residues) spans 373–382; that stretch reads KQKSKKKKRP. C2H2-type zinc fingers lie at residues 403–425, 434–456, 466–488, 497–520, 526–548, 554–577, 583–605, 611–634, 640–662, 668–691, 697–719, 725–748, and 754–777; these read YPCM…TKNH, YHCT…MESH, TECD…KTMH, CKCK…LVVH, HICG…IRVH, YECQ…KSKH, LKCG…AVLH, HQCS…ISVH, HKCD…VATH, HQCR…LSAH, FKCK…MKTH, YQCE…ISIH, and HSCD…MRHH.

Belongs to the krueppel C2H2-type zinc-finger protein family. ZFX/ZFY subfamily.

It localises to the nucleus. Functionally, probable transcriptional activator. Binds to the consensus sequence 5'-AGGCCY-3'. The polypeptide is Zinc finger Y-chromosomal protein 1 (Zfy1) (Mus musculus (Mouse)).